The primary structure comprises 190 residues: Elongation factor P (190 aa).

An N6-(3,6-diaminohexanoyl)-5-hydroxylysine modification is found at K34.

This sequence belongs to the elongation factor P family. Post-translationally, may be beta-lysylated on the epsilon-amino group of Lys-34 by the combined action of EpmA and EpmB, and then hydroxylated on the C5 position of the same residue by EpmC (if this protein is present). Lysylation is critical for the stimulatory effect of EF-P on peptide-bond formation. The lysylation moiety may extend toward the peptidyltransferase center and stabilize the terminal 3-CCA end of the tRNA. Hydroxylation of the C5 position on Lys-34 may allow additional potential stabilizing hydrogen-bond interactions with the P-tRNA.

It is found in the cytoplasm. Its pathway is protein biosynthesis; polypeptide chain elongation. Involved in peptide bond synthesis. Alleviates ribosome stalling that occurs when 3 or more consecutive Pro residues or the sequence PPG is present in a protein, possibly by augmenting the peptidyl transferase activity of the ribosome. Modification of Lys-34 is required for alleviation. This chain is Elongation factor P, found in Psychrobacter arcticus (strain DSM 17307 / VKM B-2377 / 273-4).